A 162-amino-acid chain; its full sequence is Probable ergosterol biosynthetic protein 28 homolog (162 aa).

The next 4 helical transmembrane spans lie at 7–25 (AWMS…MCYA), 40–60 (LSRA…VLIF), 69–89 (IAHI…VFFY), and 96–116 (IVTV…LTFL).

This sequence belongs to the ERG28 family. In terms of tissue distribution, expressed in tissues including muscles, intestine and neurons.

The protein resides in the endoplasmic reticulum membrane. It localises to the cell projection. Its subcellular location is the dendrite. In terms of biological role, promotes the translocation of slo-1 potassium ion channels from the endoplasmic reticulum to its final destination at the plasma membrane, probably by shielding from premature proteasomal degradation in the endoplasmic reticulum. Maintains the levels of slo-1 potassium ion channel at the presynaptic neurons. The protein is Probable ergosterol biosynthetic protein 28 homolog of Caenorhabditis elegans.